The sequence spans 540 residues: Keratin, type II cytoskeletal 73 (540 aa).

Positions Met-1–Gln-131 are head. Positions Glu-132–Leu-167 are coil 1A. The IF rod domain occupies Glu-132–Met-445. Residues Gln-168 to Tyr-186 are linker 1. Residues Ile-187–Met-278 form a coil 1B region. Residues Gln-279–Ile-302 form a linker 12 region. A coil 2 region spans residues Ile-303–Glu-441. The segment at Glu-442–Arg-540 is tail. Positions Gly-509–Arg-540 are disordered. Polar residues predominate over residues Ala-530 to Arg-540.

Belongs to the intermediate filament family. In terms of assembly, heterotetramer of two type I and two type II keratins.

Has a role in hair formation. Specific component of keratin intermediate filaments in the inner root sheath (IRS) of the hair follicle. This is Keratin, type II cytoskeletal 73 (KRT73) from Bos taurus (Bovine).